The sequence spans 504 residues: MXXXXGYLEFDGARQQSFLYPLFFREYIYVLAYDHGLNRLNRNRSIFFENVDYEKKYSSLIVKRLILRMYEQNRLIIPSKDLNQNHFFGHTSLFYYQMISVLFAVIVEIPFSLRLGSSFEGKQFKKSYNLQSIHSIFPFLEDKLSHFNYVLDVVIPYPIHLEILVQTLRYRVKDASSLHFFRFCLYEYCNWKDFSIKKKSILNPRFFLFLYNSHVCEYESIFFFLRKRSSHLRSTSYEVLFERILFYGKIQHFLKVFINSFPAILGLLKDPFIHYVRYHGRCILATKDTPLLMNKWKYYFVNLCQCYFSVWFQSQKVNINQLSKDNLEFLGYLSSLRLNPLVVRSQMLENSFLIDNVRIKLDSKIPISSIIGSLAKDKFCNVLGHPISKAVWTDSSDSDILNRFVRISRNISHYYSGSSNKKNLYRIKYILRLCCVKTLARKHKSTVRAFLKRLGSGLLEEFLTGEDQVLSLIFPRSYYASKRLYRVRIWYLDILYLNDLVNHE.

This sequence belongs to the intron maturase 2 family. MatK subfamily.

Its subcellular location is the plastid. The protein resides in the chloroplast. Its function is as follows. Usually encoded in the trnK tRNA gene intron. Probably assists in splicing its own and other chloroplast group II introns. The chain is Maturase K from Rorippa amphibia (Great yellow-cress).